Here is a 254-residue protein sequence, read N- to C-terminus: 5'-methylthioadenosine/S-adenosylhomocysteine nucleosidase (254 aa).

Methionine 1 carries the N-acetylmethionine modification. The active-site Proton acceptor is glutamate 25. S-methyl-5'-thioadenosine-binding positions include threonine 103 and 186 to 189 (KDME). The adenine site is built by lysine 186 and aspartate 212. Aspartate 212 acts as the Proton donor in catalysis.

This sequence belongs to the PNP/UDP phosphorylase family. MtnN subfamily. In terms of assembly, homodimer.

The catalysed reaction is S-methyl-5'-thioadenosine + H2O = 5-(methylsulfanyl)-D-ribose + adenine. It carries out the reaction S-adenosyl-L-homocysteine + H2O = S-(5-deoxy-D-ribos-5-yl)-L-homocysteine + adenine. It catalyses the reaction 5'-deoxyadenosine + H2O = 5-deoxy-D-ribose + adenine. Its pathway is amino-acid biosynthesis; L-methionine biosynthesis via salvage pathway; S-methyl-5-thio-alpha-D-ribose 1-phosphate from S-methyl-5'-thioadenosine (hydrolase route): step 1/2. Its function is as follows. Enzyme of the methionine cycle that catalyzes the irreversible cleavage of the glycosidic bond in 5'-methylthioadenosine (MTA) and S-adenosylhomocysteine (SAH/AdoHcy) to a lesser extent, to adenine and the corresponding thioribose, 5'-methylthioribose and S-ribosylhomocysteine, respectively. Contributes to the maintenance of AdoMet homeostasis and is required to sustain high rates of ethylene synthesis. The chain is 5'-methylthioadenosine/S-adenosylhomocysteine nucleosidase (MTN2) from Arabidopsis thaliana (Mouse-ear cress).